Here is a 111-residue protein sequence, read N- to C-terminus: Integration host factor subunit alpha (111 aa).

This sequence belongs to the bacterial histone-like protein family. In terms of assembly, heterodimer of an alpha and a beta chain.

In terms of biological role, this protein is one of the two subunits of integration host factor, a specific DNA-binding protein that functions in genetic recombination as well as in transcriptional and translational control. In Polaromonas sp. (strain JS666 / ATCC BAA-500), this protein is Integration host factor subunit alpha.